The sequence spans 259 residues: Flap endonuclease Xni (259 aa).

D109 provides a ligand contact to Mg(2+). Positions 165–255 (VTPAQLTDYW…FNLQDIRFNS (91 aa)) constitute a 5'-3' exonuclease domain. K(+) contacts are provided by L176, P185, V187, and I190. An interaction with DNA region spans residues 189–194 (GIGPKA).

It belongs to the Xni family. Requires Mg(2+) as cofactor. The cofactor is K(+).

In terms of biological role, has flap endonuclease activity. During DNA replication, flap endonucleases cleave the 5'-overhanging flap structure that is generated by displacement synthesis when DNA polymerase encounters the 5'-end of a downstream Okazaki fragment. The protein is Flap endonuclease Xni of Vibrio cholerae serotype O1 (strain ATCC 39315 / El Tor Inaba N16961).